The chain runs to 290 residues: ATP synthase gamma chain (290 aa).

Belongs to the ATPase gamma chain family. In terms of assembly, F-type ATPases have 2 components, CF(1) - the catalytic core - and CF(0) - the membrane proton channel. CF(1) has five subunits: alpha(3), beta(3), gamma(1), delta(1), epsilon(1). CF(0) has three main subunits: a, b and c.

It localises to the cell membrane. In terms of biological role, produces ATP from ADP in the presence of a proton gradient across the membrane. The gamma chain is believed to be important in regulating ATPase activity and the flow of protons through the CF(0) complex. The protein is ATP synthase gamma chain of Roseiflexus sp. (strain RS-1).